Consider the following 467-residue polypeptide: Glutamate--tRNA ligase (467 aa).

Positions 9–19 (PSPTGYLHIGG) match the 'HIGH' region motif. The short motif at 237–241 (KLSKR) is the 'KMSKS' region element. Lys-240 is a binding site for ATP.

It belongs to the class-I aminoacyl-tRNA synthetase family. Glutamate--tRNA ligase type 1 subfamily. Monomer.

It localises to the cytoplasm. It catalyses the reaction tRNA(Glu) + L-glutamate + ATP = L-glutamyl-tRNA(Glu) + AMP + diphosphate. Functionally, catalyzes the attachment of glutamate to tRNA(Glu) in a two-step reaction: glutamate is first activated by ATP to form Glu-AMP and then transferred to the acceptor end of tRNA(Glu). The protein is Glutamate--tRNA ligase of Xylella fastidiosa (strain M23).